We begin with the raw amino-acid sequence, 432 residues long: Adenylosuccinate synthetase (432 aa).

GTP is bound by residues 12–18 and 40–42; these read GDEGKGK and GHT. Catalysis depends on Asp13, which acts as the Proton acceptor. The Mg(2+) site is built by Asp13 and Gly40. IMP contacts are provided by residues 13 to 16, 38 to 41, Thr129, Arg143, Gln224, Thr239, and Arg303; these read DEGK and NAGH. Catalysis depends on His41, which acts as the Proton donor. A substrate-binding site is contributed by 299-305; the sequence is VTTGRRR. Residues Arg305, 331–333, and 413–415 each bind GTP; these read KLD and GVG.

The protein belongs to the adenylosuccinate synthetase family. Homodimer. Mg(2+) serves as cofactor.

It localises to the cytoplasm. It catalyses the reaction IMP + L-aspartate + GTP = N(6)-(1,2-dicarboxyethyl)-AMP + GDP + phosphate + 2 H(+). The protein operates within purine metabolism; AMP biosynthesis via de novo pathway; AMP from IMP: step 1/2. Plays an important role in the de novo pathway of purine nucleotide biosynthesis. Catalyzes the first committed step in the biosynthesis of AMP from IMP. This is Adenylosuccinate synthetase from Mycolicibacterium paratuberculosis (strain ATCC BAA-968 / K-10) (Mycobacterium paratuberculosis).